The following is a 163-amino-acid chain: 3-isopropylmalate dehydratase small subunit (163 aa).

It belongs to the LeuD family. LeuD type 2 subfamily. Heterodimer of LeuC and LeuD.

It catalyses the reaction (2R,3S)-3-isopropylmalate = (2S)-2-isopropylmalate. It participates in amino-acid biosynthesis; L-leucine biosynthesis; L-leucine from 3-methyl-2-oxobutanoate: step 2/4. In terms of biological role, catalyzes the isomerization between 2-isopropylmalate and 3-isopropylmalate, via the formation of 2-isopropylmaleate. The sequence is that of 3-isopropylmalate dehydratase small subunit (leuD) from Pyrococcus horikoshii (strain ATCC 700860 / DSM 12428 / JCM 9974 / NBRC 100139 / OT-3).